The following is a 244-amino-acid chain: LexA repressor (244 aa).

The tract at residues 1–24 (MSDSSDTTVDGASDGASDGASGAD) is disordered. Low complexity predominate over residues 10-24 (DGASDGASDGASGAD). A DNA-binding region (H-T-H motif) is located at residues 58–78 (IREIGDAVGLTSTSSVAHQLR). Active-site for autocatalytic cleavage activity residues include S168 and K205.

The protein belongs to the peptidase S24 family. In terms of assembly, homodimer.

The enzyme catalyses Hydrolysis of Ala-|-Gly bond in repressor LexA.. Its function is as follows. Represses a number of genes involved in the response to DNA damage (SOS response), including recA and lexA. In the presence of single-stranded DNA, RecA interacts with LexA causing an autocatalytic cleavage which disrupts the DNA-binding part of LexA, leading to derepression of the SOS regulon and eventually DNA repair. This Mycobacterium ulcerans (strain Agy99) protein is LexA repressor.